The primary structure comprises 71 residues: Large ribosomal subunit protein uL30 (71 aa).

The protein belongs to the universal ribosomal protein uL30 family. Part of the 50S ribosomal subunit.

The chain is Large ribosomal subunit protein uL30 from Borreliella burgdorferi (strain ATCC 35210 / DSM 4680 / CIP 102532 / B31) (Borrelia burgdorferi).